Consider the following 788-residue polypeptide: LPS-assembly protein LptD (788 aa).

An N-terminal signal peptide occupies residues 1-24; sequence MKKRFPTLLATLIWTALYSQHTLA.

Belongs to the LptD family. As to quaternary structure, component of the lipopolysaccharide transport and assembly complex. Interacts with LptE and LptA.

Its subcellular location is the cell outer membrane. Functionally, together with LptE, is involved in the assembly of lipopolysaccharide (LPS) at the surface of the outer membrane. This is LPS-assembly protein LptD from Yersinia enterocolitica serotype O:8 / biotype 1B (strain NCTC 13174 / 8081).